The sequence spans 292 residues: Enoyl-CoA hydratase domain-containing protein 2, mitochondrial (292 aa).

A mitochondrion-targeting transit peptide spans 1–35 (MLRVLCLLRPWRPLRARGCASDGAAGGSEIQVRAL). K97 carries the post-translational modification N6-acetyllysine; alternate. K97 carries the post-translational modification N6-succinyllysine; alternate.

Belongs to the enoyl-CoA hydratase/isomerase family.

It localises to the mitochondrion. This Homo sapiens (Human) protein is Enoyl-CoA hydratase domain-containing protein 2, mitochondrial (ECHDC2).